The sequence spans 123 residues: MPTVNQLIRKPRQANVKRNKVPALQENPQKRGVCTRVYTTTPRKPNSALRKVAKIRLTNGFEVIGYIPGEGHNLQEHSVVMIRGGRVKDLPGVRYHIIRGVLDTQGVKNRKQRRSKYGAKRPK.

Asp89 is modified (3-methylthioaspartic acid).

This sequence belongs to the universal ribosomal protein uS12 family. In terms of assembly, part of the 30S ribosomal subunit. Contacts proteins S8 and S17. May interact with IF1 in the 30S initiation complex.

Its function is as follows. With S4 and S5 plays an important role in translational accuracy. In terms of biological role, interacts with and stabilizes bases of the 16S rRNA that are involved in tRNA selection in the A site and with the mRNA backbone. Located at the interface of the 30S and 50S subunits, it traverses the body of the 30S subunit contacting proteins on the other side and probably holding the rRNA structure together. The combined cluster of proteins S8, S12 and S17 appears to hold together the shoulder and platform of the 30S subunit. The chain is Small ribosomal subunit protein uS12 from Rhizobium etli (strain ATCC 51251 / DSM 11541 / JCM 21823 / NBRC 15573 / CFN 42).